The chain runs to 316 residues: tRNA dimethylallyltransferase (316 aa).

Position 17–24 (17–24 (GPTASGKT)) interacts with ATP. 19–24 (TASGKT) is a binding site for substrate. 4 interaction with substrate tRNA regions span residues 42-45 (DSAL), 166-170 (QRLSR), 247-252 (RCVGYR), and 280-287 (KRQITWLR).

This sequence belongs to the IPP transferase family. As to quaternary structure, monomer. The cofactor is Mg(2+).

It carries out the reaction adenosine(37) in tRNA + dimethylallyl diphosphate = N(6)-dimethylallyladenosine(37) in tRNA + diphosphate. Its function is as follows. Catalyzes the transfer of a dimethylallyl group onto the adenine at position 37 in tRNAs that read codons beginning with uridine, leading to the formation of N6-(dimethylallyl)adenosine (i(6)A). The polypeptide is tRNA dimethylallyltransferase (Escherichia fergusonii (strain ATCC 35469 / DSM 13698 / CCUG 18766 / IAM 14443 / JCM 21226 / LMG 7866 / NBRC 102419 / NCTC 12128 / CDC 0568-73)).